Here is a 240-residue protein sequence, read N- to C-terminus: Keratinocyte-associated protein 3 (240 aa).

The next 4 membrane-spanning stretches (helical) occupy residues 21–41, 63–83, 94–114, and 163–183; these read VGLALILVGHVNLLLGAVLHG, VISVGSGLLSVSVGLVALLAS, VLLALALVNLLLSVACSLGLL, and ALALWIPSLLMSAGEAALSGY.

It belongs to the TMEM54 family. In terms of tissue distribution, expressed in skin, pancreas and keratinocytes.

Its subcellular location is the membrane. This chain is Keratinocyte-associated protein 3 (KRTCAP3), found in Homo sapiens (Human).